Here is a 299-residue protein sequence, read N- to C-terminus: Coenzyme PQQ synthesis protein B (299 aa).

It belongs to the PqqB family.

It functions in the pathway cofactor biosynthesis; pyrroloquinoline quinone biosynthesis. In terms of biological role, may be involved in the transport of PQQ or its precursor to the periplasm. The chain is Coenzyme PQQ synthesis protein B from Xanthomonas campestris pv. campestris (strain 8004).